A 156-amino-acid chain; its full sequence is Small ribosomal subunit protein uS7 (156 aa).

It belongs to the universal ribosomal protein uS7 family. As to quaternary structure, part of the 30S ribosomal subunit. Contacts proteins S9 and S11.

One of the primary rRNA binding proteins, it binds directly to 16S rRNA where it nucleates assembly of the head domain of the 30S subunit. Is located at the subunit interface close to the decoding center, probably blocks exit of the E-site tRNA. The protein is Small ribosomal subunit protein uS7 of Actinobacillus succinogenes (strain ATCC 55618 / DSM 22257 / CCUG 43843 / 130Z).